The primary structure comprises 110 residues: Snake venom vascular endothelial growth factor toxin (110 aa).

The residue at position 1 (Q1) is a Pyrrolidone carboxylic acid. Disulfide bonds link C14-C56, C45-C91, and C49-C93.

It belongs to the PDGF/VEGF growth factor family. Snake venom VEGF subfamily. Homodimer; disulfide-linked. Expressed by the venom gland.

It is found in the secreted. Snake venom VEGFs that may contribute to venom dispersion and prey subjugation by inducing vascular permeability and hypotension. This protein potently stimulates dermal human microvascular endothelial cell (dHMVEC) proliferation in a VEGFR-2 dependent manner. This stimulatory effect is correlated with activation of the MAPK Erk1/2 signaling pathway. It also appears to be a chemoattractant for migration of these cells and stimulates their radial migration in a collagen gel. In vivo, it induces angiogenesis in a Japanese quail assay. This pro-angiogenic effect may also be related to its interaction with VEGFR-2. In addition, it may induce an increase in capillary permeability after intradermal injection, as well as a drastic hypotensive effect after intravenous injection. The hypotension is mediated by nitric oxide (NO), which is produced by VEGF-activated endothelium NO synthase. This Daboia palaestinae (Palestine viper) protein is Snake venom vascular endothelial growth factor toxin.